Here is a 228-residue protein sequence, read N- to C-terminus: Cytidylate kinase (228 aa).

Position 17–25 (17–25 (GPTASGKGT)) interacts with ATP.

The protein belongs to the cytidylate kinase family. Type 1 subfamily.

It localises to the cytoplasm. The enzyme catalyses CMP + ATP = CDP + ADP. It catalyses the reaction dCMP + ATP = dCDP + ADP. The sequence is that of Cytidylate kinase from Paraburkholderia phymatum (strain DSM 17167 / CIP 108236 / LMG 21445 / STM815) (Burkholderia phymatum).